A 527-amino-acid chain; its full sequence is Ribosomal protein S6 kinase beta-1 (527 aa).

Residues 1–54 (MRRRRRRDGFYPAPDFRDREAEDMAGVFDIDLDQPEDAGSEDELEEGGQLNESM) form a disordered region. Residues 28 to 32 (FDIDL) carry the TOS motif motif. A compositionally biased stretch (acidic residues) spans 30 to 46 (IDLDQPEDAGSEDELEE). Residues 91-352 (FELLRVLGKG…AGEVQAHPFF (262 aa)) enclose the Protein kinase domain. ATP contacts are provided by residues 97 to 105 (LGKGGYGKV) and Lys-123. The active-site Proton acceptor is Asp-218. The residue at position 252 (Thr-252) is a Phosphothreonine; by PDPK1. The 71-residue stretch at 353–423 (RHINWEELLA…VAPSVLESVK (71 aa)) folds into the AGC-kinase C-terminal domain. Ser-394 carries the phosphoserine modification. Thr-412 bears the Phosphothreonine; by MTOR, NEK6 and NEK7 mark. Residues 424 to 527 (EKFSFEPKIR…PEHLRMNLEL (104 aa)) are autoinhibitory domain. Phosphoserine occurs at positions 434 and 441. Thr-444 bears the Phosphothreonine mark. Residues Ser-447 and Ser-452 each carry the phosphoserine modification. Lys-516 is subject to N6-acetyllysine.

Belongs to the protein kinase superfamily. AGC Ser/Thr protein kinase family. S6 kinase subfamily. As to quaternary structure, interacts with PPP1R9A/neurabin-1. Interacts with RPTOR. Interacts with IRS1. Interacts with EIF3B and EIF3C. Interacts with TRAF4. Interacts with POLDIP3. Interacts (via N-terminus) with IER5. Post-translationally, phosphorylation at Thr-412 is regulated by mTORC1. The phosphorylation at this site is maintained by an agonist-dependent autophosphorylation mechanism. Activated by phosphorylation at Thr-252 by PDPK1. Dephosphorylation by PPP1CC at Thr-412 in mitochondrion.

Its subcellular location is the cytoplasm. The protein localises to the synapse. It is found in the synaptosome. It localises to the mitochondrion outer membrane. The protein resides in the mitochondrion. It catalyses the reaction L-seryl-[protein] + ATP = O-phospho-L-seryl-[protein] + ADP + H(+). The catalysed reaction is L-threonyl-[protein] + ATP = O-phospho-L-threonyl-[protein] + ADP + H(+). Its activity is regulated as follows. Inactivated by binding to URI1. Activation requires multiple phosphorylation events on serine/threonine residues. Activation appears to be first mediated by phosphorylation of multiple sites in the autoinhibitory domain, which facilitates phosphorylation at Thr-412, disrupting the autoinhibitory mechanism and allowing phosphorylation of Thr-252 by PDPK1. The active conformation of the kinase is believed to be stabilized by a mechanism involving three conserved phosphorylation sites located in the kinase domain activation loop (Thr-252) and in the AGC-kinase C-terminal domain (Ser-394 in the middle of the tail/linker region and Thr-412 within a hydrophobic motif at its end). Activated by mTORC1; isoform Alpha I and isoform Alpha II are sensitive to rapamycin, which inhibits activating phosphorylation at Thr-412. Activated by PDPK1. In terms of biological role, serine/threonine-protein kinase that acts downstream of mTOR signaling in response to growth factors and nutrients to promote cell proliferation, cell growth and cell cycle progression. Regulates protein synthesis through phosphorylation of EIF4B, RPS6 and EEF2K, and contributes to cell survival by repressing the pro-apoptotic function of BAD. Under conditions of nutrient depletion, the inactive form associates with the EIF3 translation initiation complex. Upon mitogenic stimulation, phosphorylation by the mechanistic target of rapamycin complex 1 (mTORC1) leads to dissociation from the EIF3 complex and activation. The active form then phosphorylates and activates several substrates in the pre-initiation complex, including the EIF2B complex and the cap-binding complex component EIF4B. Also controls translation initiation by phosphorylating a negative regulator of EIF4A, PDCD4, targeting it for ubiquitination and subsequent proteolysis. Promotes initiation of the pioneer round of protein synthesis by phosphorylating POLDIP3/SKAR. In response to IGF1, activates translation elongation by phosphorylating EEF2 kinase (EEF2K), which leads to its inhibition and thus activation of EEF2. Also plays a role in feedback regulation of mTORC2 by mTORC1 by phosphorylating MAPKAP1/SIN1, MTOR and RICTOR, resulting in the inhibition of mTORC2 and AKT1 signaling. Also involved in feedback regulation of mTORC1 and mTORC2 by phosphorylating DEPTOR. Mediates cell survival by phosphorylating the pro-apoptotic protein BAD and suppressing its pro-apoptotic function. Phosphorylates mitochondrial URI1 leading to dissociation of a URI1-PPP1CC complex. The free mitochondrial PPP1CC can then dephosphorylate RPS6KB1 at Thr-412, which is proposed to be a negative feedback mechanism for the RPS6KB1 anti-apoptotic function. Mediates TNF-alpha-induced insulin resistance by phosphorylating IRS1 at multiple serine residues, resulting in accelerated degradation of IRS1. In cells lacking functional TSC1-2 complex, constitutively phosphorylates and inhibits GSK3B. May be involved in cytoskeletal rearrangement through binding to neurabin. Phosphorylates and activates the pyrimidine biosynthesis enzyme CAD, downstream of MTOR. Following activation by mTORC1, phosphorylates EPRS and thereby plays a key role in fatty acid uptake by adipocytes and also most probably in interferon-gamma-induced translation inhibition. The chain is Ribosomal protein S6 kinase beta-1 (RPS6KB1) from Bos taurus (Bovine).